Reading from the N-terminus, the 312-residue chain is MVKRKHLLGLQELSKEEINTILDIARPMRDIIMRDIKKVPTLRGKTVATLFYEPSTRTRSSFELAAKFLSADTLSINVSSSSVQKGESLIDTIRTLEAMGVEIIAVRHQQSGVPKFISLNTKMSVINAGDGFHEHPTQALLDLFTIKQKLYKIEGLKVAIIGDIYHSRVARSNIWGLLKLGAEVTVCGPPSLIPVEIEKLGVRVEINLQRTLEWADVVNVLRIQKERQDAGYLTTLDEYRDWYGLTQEKLEKLKGKKLLILHPGPLNRGVEIDDYVADSPNAVVNEQVTNGVAVRMAVLYLLAGGNESGNVD.

Positions 57 and 58 each coordinate carbamoyl phosphate. Residue Lys-85 coordinates L-aspartate. Arg-107, His-135, and Gln-138 together coordinate carbamoyl phosphate. L-aspartate is bound by residues Arg-168 and Arg-222. The carbamoyl phosphate site is built by Gly-264 and Pro-265.

It belongs to the aspartate/ornithine carbamoyltransferase superfamily. ATCase family. As to quaternary structure, heterododecamer (2C3:3R2) of six catalytic PyrB chains organized as two trimers (C3), and six regulatory PyrI chains organized as three dimers (R2).

It catalyses the reaction carbamoyl phosphate + L-aspartate = N-carbamoyl-L-aspartate + phosphate + H(+). Its pathway is pyrimidine metabolism; UMP biosynthesis via de novo pathway; (S)-dihydroorotate from bicarbonate: step 2/3. Catalyzes the condensation of carbamoyl phosphate and aspartate to form carbamoyl aspartate and inorganic phosphate, the committed step in the de novo pyrimidine nucleotide biosynthesis pathway. The protein is Aspartate carbamoyltransferase catalytic subunit of Carboxydothermus hydrogenoformans (strain ATCC BAA-161 / DSM 6008 / Z-2901).